A 730-amino-acid chain; its full sequence is MASKKHVVCQSCDINCVVEAEVKADGKIQTKSISEPHPTTPPNSICMKSVNADTIRTHKDRVLYPLKNVGSKRGEQRWERISWDQALDEIAEKLKKIIAKYGPESLGVSQTEINQQSEYGTLRRFMNLLGSPNWTSAMYMCIGNTAGVHRVTHGSYSFASFADSNCLLFIGKNLSNHNWVSQFNDLKAALKRGCKLIVLDPRRTKVAEMADIWLPLRYGTDAALFLGMINVIINEQLYDKEFVENWCVGFEELKERVQEYPLDKVAEITGCDAGEIRKAAVMFATESPASIPWAVSTDMQKNSCSAIRAQCILRAIVGSFVNGAEILGAPHSDLVPISKIQMHEALPEEKKKLQLGTETYPFLTYTGMSALEEPSERVYGVKYFHNMGAFMANPTALFTAMATEKPYPVKAFFALASNALMGYANQQNALKGLMNQDLVVCYDQFMTPTAQLADYVLPGDHWLERPVVQPNWEGIPFGNTSQQVVEPAGEAKDEYYFIRELAVRMGLEEHFPWKDRLELINYRISPTGMEWEEYQKQYTYMSKLPDYFGPEGVGVATPSGKVELYSSVFEKLGYDPLPYYHEPLQTEISDPELAKEYPLILFAGLREDSNFQSCYHQPGILRDAEPDPVALLHPKTAQSLGLPSGEWIWVETTHGRLKLLLKHDGAQPEGTIRIPHGRWCPEQEGGPETGFSGAMLHNDAMVLSDDDWNLDPEQGLPNLRGGILAKAYKC.

2 residues coordinate [4Fe-4S] cluster: Cys-9 and Cys-12. Residue Asp-13 is part of the active site. Residues Cys-16 and Cys-46 each contribute to the [4Fe-4S] cluster site. W-bis(molybdopterin guanine dinucleotide)-binding positions include Lys-48, 111 to 114 (TEIN), Cys-141, 172 to 173 (KN), 177 to 179 (HNW), 199 to 202 (LDPR), 218 to 221 (YGTD), Ser-296, Gln-300, 416 to 418 (ASN), 422 to 423 (GY), 442 to 444 (YDQ), Asp-460, Arg-465, 602 to 613 (FAGLREDSNFQS), Arg-606, His-676, Asp-699, and Arg-720.

This sequence belongs to the prokaryotic molybdopterin-containing oxidoreductase family. As to quaternary structure, monomer. [4Fe-4S] cluster serves as cofactor. W-bis(molybdopterin guanine dinucleotide) is required as a cofactor.

It catalyses the reaction acetaldehyde = acetylene + H2O. Its function is as follows. Catalyzes the hydration of acetylene to form acetaldehyde. Ethylene cannot act as a substrate. The sequence is that of Acetylene hydratase from Syntrophotalea acetylenica (Pelobacter acetylenicus).